The chain runs to 160 residues: Cytochrome b6-f complex subunit 4 (160 aa).

3 consecutive transmembrane segments (helical) span residues 36–56, 95–115, and 131–151; these read LLYI…GLAV, LLGV…PFLE, and TIFL…ALPI.

The protein belongs to the cytochrome b family. PetD subfamily. The 4 large subunits of the cytochrome b6-f complex are cytochrome b6, subunit IV (17 kDa polypeptide, petD), cytochrome f and the Rieske protein, while the 4 small subunits are petG, petL, petM and petN. The complex functions as a dimer.

The protein localises to the plastid. Its subcellular location is the chloroplast thylakoid membrane. Functionally, component of the cytochrome b6-f complex, which mediates electron transfer between photosystem II (PSII) and photosystem I (PSI), cyclic electron flow around PSI, and state transitions. This chain is Cytochrome b6-f complex subunit 4, found in Anthoceros angustus (Hornwort).